The chain runs to 196 residues: Peptide deformylase (196 aa).

Residues Cys-105 and His-147 each coordinate Fe cation. The active site involves Glu-148. His-151 serves as a coordination point for Fe cation.

The protein belongs to the polypeptide deformylase family. The cofactor is Fe(2+).

The catalysed reaction is N-terminal N-formyl-L-methionyl-[peptide] + H2O = N-terminal L-methionyl-[peptide] + formate. Removes the formyl group from the N-terminal Met of newly synthesized proteins. Requires at least a dipeptide for an efficient rate of reaction. N-terminal L-methionine is a prerequisite for activity but the enzyme has broad specificity at other positions. The chain is Peptide deformylase from Flavobacterium johnsoniae (strain ATCC 17061 / DSM 2064 / JCM 8514 / BCRC 14874 / CCUG 350202 / NBRC 14942 / NCIMB 11054 / UW101) (Cytophaga johnsonae).